The primary structure comprises 281 residues: Probable endonuclease 4 (281 aa).

9 residues coordinate Zn(2+): His70, His110, Glu146, Asp180, His183, His217, Asp230, His232, and Glu262.

This sequence belongs to the AP endonuclease 2 family. The cofactor is Zn(2+).

It catalyses the reaction Endonucleolytic cleavage to 5'-phosphooligonucleotide end-products.. Its function is as follows. Endonuclease IV plays a role in DNA repair. It cleaves phosphodiester bonds at apurinic or apyrimidinic (AP) sites, generating a 3'-hydroxyl group and a 5'-terminal sugar phosphate. This chain is Probable endonuclease 4, found in Nitratiruptor sp. (strain SB155-2).